A 448-amino-acid polypeptide reads, in one-letter code: Immunoglobulin G-binding protein G (448 aa).

Positions 1-33 are cleaved as a signal peptide; the sequence is MEKEKKVKYFLRKSAFGLASVSAAFLVGSTVFA. Tandem repeats lie at residues 104 to 140, 179 to 215, 228 to 282, and 298 to 352. Residues 104 to 215 form a 2 X 37 AA repeats region; sequence LAKAKADALK…AKTVEGVKEL (112 aa). The interval 228-352 is 2 X 55 AA repeats; that stretch reads TYKLILNGKT…DATKTFTVTE (125 aa). The tract at residues 358-422 is disordered; that stretch reads PGDAPTEPEK…TLPTTGEGSN (65 aa). Basic and acidic residues predominate over residues 384–412; the sequence is AKDDAKKDDTKKEDAKKPEAKKDDAKKAE. Positions 386–410 are 5 X 5 AA repeats of [DE]-D-A-K-K; the sequence is DDAKKDDTKKEDAKKPEAKKDDAKK. The LPXTG sorting signal motif lies at 414 to 418; the sequence is LPTTG. Thr-417 carries the post-translational modification Pentaglycyl murein peptidoglycan amidated threonine. The propeptide at 418–448 is removed by sortase; that stretch reads GEGSNPFFTAAALAVMAGAGALAVASKRKED.

It is found in the secreted. Its subcellular location is the cell wall. Its function is as follows. Binds to the constant Fc region of IgG with high affinity. In Streptococcus sp. group G, this protein is Immunoglobulin G-binding protein G (spg).